The chain runs to 474 residues: Pyoverdine export outer membrane protein OpmQ (474 aa).

An N-terminal signal peptide occupies residues 1–17 (MSMKNLSLISACLLLGA). The N-palmitoyl cysteine moiety is linked to residue Cys18. A lipid anchor (S-diacylglycerol cysteine) is attached at Cys18.

Belongs to the outer membrane factor (OMF) (TC 1.B.17) family. As to quaternary structure, part of the tripartite efflux system PvdRT-OpmQ, which is composed of an inner membrane component with both ATPase and permease domains, PvdT, a periplasmic membrane fusion protein, PvdR, and an outer membrane component, OpmQ.

The protein localises to the cell outer membrane. In terms of biological role, part of the tripartite efflux system PvdRT-OpmQ required for the secretion into the extracellular milieu of the siderophore pyoverdine (PVD), which is involved in iron acquisition. The system is responsible for export of newly synthesized PVD after the final steps of biosynthesis have taken place in the periplasm. It is also responsible for recycling of PVD after internalization of ferri-PVD into the periplasm by the outer-membrane receptor FpvA and release of iron from PVD, thus making PVD available for new cycles of iron uptake. In addition, can expel unwanted metals complexed with PVD from the periplasm into the extracellular medium. This is Pyoverdine export outer membrane protein OpmQ from Pseudomonas aeruginosa (strain ATCC 15692 / DSM 22644 / CIP 104116 / JCM 14847 / LMG 12228 / 1C / PRS 101 / PAO1).